Reading from the N-terminus, the 213-residue chain is Peptidyl-prolyl cis-trans isomerase B (213 aa).

The signal sequence occupies residues M1–S23. In terms of domain architecture, PPIase cyclophilin-type spans F35–H197. Residues D210–E213 carry the Prevents secretion from ER motif.

This sequence belongs to the cyclophilin-type PPIase family. PPIase B subfamily.

Its subcellular location is the endoplasmic reticulum lumen. It carries out the reaction [protein]-peptidylproline (omega=180) = [protein]-peptidylproline (omega=0). With respect to regulation, inhibited by cyclosporin A (CsA). In terms of biological role, PPIases accelerate the folding of proteins. It catalyzes the cis-trans isomerization of proline imidic peptide bonds in oligopeptides. In Schistosoma japonicum (Blood fluke), this protein is Peptidyl-prolyl cis-trans isomerase B.